Reading from the N-terminus, the 177-residue chain is Protein LIGHT-DEPENDENT SHORT HYPOCOTYLS 10 (177 aa).

Residues 1 to 10 (MSSPRERGKS) show a composition bias toward basic and acidic residues. 2 disordered regions span residues 1–31 (MSSP…SQKR) and 144–177 (RGIP…FSFS). The ALOG domain occupies 25-152 (RYESQKRRDW…ARGIPYKKKK (128 aa)). The Nuclear localization signal motif lies at 150–154 (KKKKK). Low complexity predominate over residues 168–177 (SSSSSSFSFS).

The protein belongs to the plant homeotic and developmental regulators ALOG protein family.

The protein localises to the nucleus. Functionally, probable transcription regulator that acts as a developmental regulator by promoting cell growth in response to light. The polypeptide is Protein LIGHT-DEPENDENT SHORT HYPOCOTYLS 10 (LSH10) (Arabidopsis thaliana (Mouse-ear cress)).